Consider the following 308-residue polypeptide: MATITAAMVKELRETTGVGMMDCKQALAETDGNIDAAIDWLRKKGLSKAAKKAGRVAAEGLIGALTDGTKGVVIEVNSETDFVARNEQFQGLVKMIAQVALKVGADLDAINAAPVGSTTVAGAIADAIATIGENMTLRRAAALSVSQGVVASYIHNAVIDGAGKMGVIVALESAGKADELAVLGRQLAMHVAAANPQALDPTSLDPAVVQREREVMADKYRQQGKPENMIEKIVENGLKTYYKEVCLLEQAYIHDEKGKSVAQAVKEAEGKVGAPIKIVGFVRYALGEGIEKQTSDFAAEVAAASGQK.

The interval 80–83 (TDFV) is involved in Mg(2+) ion dislocation from EF-Tu.

It belongs to the EF-Ts family.

The protein resides in the cytoplasm. Its function is as follows. Associates with the EF-Tu.GDP complex and induces the exchange of GDP to GTP. It remains bound to the aminoacyl-tRNA.EF-Tu.GTP complex up to the GTP hydrolysis stage on the ribosome. This is Elongation factor Ts from Rhodopseudomonas palustris (strain ATCC BAA-98 / CGA009).